The sequence spans 648 residues: Beta-glucuronidase (648 aa).

Residues 1–22 (MSLKWSACWVALGQLLCSCALA) form the signal peptide. N-linked (GlcNAc...) asparagine glycans are attached at residues N172 and N416. The active-site Proton donor is the E447. N627 carries N-linked (GlcNAc...) asparagine glycosylation.

The protein belongs to the glycosyl hydrolase 2 family. Homotetramer.

It localises to the lysosome. The protein resides in the endoplasmic reticulum. The catalysed reaction is a beta-D-glucuronoside + H2O = D-glucuronate + an alcohol. With respect to regulation, inhibited by L-aspartic acid. In terms of biological role, plays an important role in the degradation of dermatan and keratan sulfates. This is Beta-glucuronidase (Gusb) from Mus musculus (Mouse).